Here is a 299-residue protein sequence, read N- to C-terminus: MMCFLLIILSILVVFAFVLGNFSNGFIALVNVIDWVNTRKISSADQILTALVVSRIGLLWVMLFLWYATVFNSALYGLEVRIVASNAWAVMNHFSIWLAASLSIFCLLKIANFSNLIFLHLKKRIKSVVLVILLGPLVFLICNLAVITMDERVWTKEYEGNVTWKIKLRNAIQLSSLTVTTLANLIPFTLSLICFLLLICSLCKHLKKMRLHSKGSQDPSTKVHIKALQTVTSFLMLFAIYFLCIITSTWNLRTQQSKLVLLLCQTVAIMYPSFHSFILIMGSRKLKQTFLSVLWQMTR.

M1 is a topological domain (extracellular). A helical membrane pass occupies residues 2–22 (MCFLLIILSILVVFAFVLGNF). Topologically, residues 23 to 55 (SNGFIALVNVIDWVNTRKISSADQILTALVVSR) are cytoplasmic. The helical transmembrane segment at 56-76 (IGLLWVMLFLWYATVFNSALY) threads the bilayer. Topologically, residues 77 to 87 (GLEVRIVASNA) are extracellular. A helical membrane pass occupies residues 88–108 (WAVMNHFSIWLAASLSIFCLL). Residues 109–127 (KIANFSNLIFLHLKKRIKS) are Cytoplasmic-facing. The helical transmembrane segment at 128-148 (VVLVILLGPLVFLICNLAVIT) threads the bilayer. Residues 149–181 (MDERVWTKEYEGNVTWKIKLRNAIQLSSLTVTT) are Extracellular-facing. An N-linked (GlcNAc...) asparagine glycan is attached at N161. Residues 182-202 (LANLIPFTLSLICFLLLICSL) form a helical membrane-spanning segment. The Cytoplasmic portion of the chain corresponds to 203 to 226 (CKHLKKMRLHSKGSQDPSTKVHIK). Residues 227 to 247 (ALQTVTSFLMLFAIYFLCIIT) form a helical membrane-spanning segment. The Extracellular segment spans residues 248-259 (STWNLRTQQSKL). The helical transmembrane segment at 260 to 280 (VLLLCQTVAIMYPSFHSFILI) threads the bilayer. The Cytoplasmic portion of the chain corresponds to 281–299 (MGSRKLKQTFLSVLWQMTR).

It belongs to the G-protein coupled receptor T2R family.

It is found in the membrane. Receptor that may play a role in the perception of bitterness and is gustducin-linked. May play a role in sensing the chemical composition of the gastrointestinal content. The activity of this receptor may stimulate alpha gustducin, mediate PLC-beta-2 activation and lead to the gating of TRPM5. This is Taste receptor type 2 member 19 (TAS2R19) from Pan paniscus (Pygmy chimpanzee).